Reading from the N-terminus, the 83-residue chain is Exodeoxyribonuclease 7 small subunit (83 aa).

Belongs to the XseB family. In terms of assembly, heterooligomer composed of large and small subunits.

Its subcellular location is the cytoplasm. It catalyses the reaction Exonucleolytic cleavage in either 5'- to 3'- or 3'- to 5'-direction to yield nucleoside 5'-phosphates.. Bidirectionally degrades single-stranded DNA into large acid-insoluble oligonucleotides, which are then degraded further into small acid-soluble oligonucleotides. The polypeptide is Exodeoxyribonuclease 7 small subunit (Rhizobium meliloti (strain 1021) (Ensifer meliloti)).